Consider the following 263-residue polypeptide: Izumo sperm-egg fusion protein 3 (263 aa).

Positions 1–22 (MGDLWVLLFSSLSLAAFHGVRG) are cleaved as a signal peptide. At 23–176 (CLECDPKFTE…EDPKTAENRE (154 aa)) the chain is on the extracellular side. Asparagine 98 and asparagine 128 each carry an N-linked (GlcNAc...) asparagine glycan. A helical transmembrane segment spans residues 177 to 197 (ISLYLIFIAEAVILASAVLLF). Topologically, residues 198-263 (HVCISHRRKM…CAESEMQTGT (66 aa)) are cytoplasmic. The tract at residues 241-263 (GRSNSNSLTGEPTCAESEMQTGT) is disordered.

It belongs to the Izumo family. In terms of assembly, monomer and homodimer. Sperm-specific (at protein level).

It localises to the cell membrane. It is found in the cytoplasmic vesicle. Its subcellular location is the secretory vesicle. The protein localises to the acrosome inner membrane. Functionally, plays an important role in the biogenesis of the acrosome during sperm development. The sequence is that of Izumo sperm-egg fusion protein 3 (Izumo3) from Mus musculus (Mouse).